The primary structure comprises 447 residues: Phospholipase A(1) LCAT3 (447 aa).

The active-site Acyl-ester intermediate is the S177. Active-site charge relay system residues include D384 and H409.

This sequence belongs to the AB hydrolase superfamily. Lipase family.

Its subcellular location is the microsome membrane. It carries out the reaction a 1,2-diacyl-sn-glycero-3-phosphocholine + H2O = a 2-acyl-sn-glycero-3-phosphocholine + a fatty acid + H(+). In terms of biological role, hydrolyzes the sn-1 acylester bond of phospholipids. Phosphatidylcholine, phosphatidylethanolamine and phosphatidic acid can be used as substrates. Weak activity with lysophosphatidylcholine and no activity with tripalmitoylglycerol and cholesteryl oleate. Seems to have a preference for unsaturated fatty acids at the sn-1 position. The protein is Phospholipase A(1) LCAT3 (LCAT3) of Arabidopsis thaliana (Mouse-ear cress).